The chain runs to 448 residues: Iroquois-class homeodomain protein irx-3 (448 aa).

The homeobox; TALE-type DNA-binding region spans 108 to 170; sequence DPSRPKNATR…NARRRLKKEN (63 aa). A disordered region spans residues 171-247; that stretch reads KMTWAPRSRT…EVSDGFEDLN (77 aa). Residues 195 to 222 are compositionally biased toward acidic residues; it reads KHEDEEEIDLENIDTEDIESKEDLDDPD. A compositionally biased stretch (basic and acidic residues) spans 223-237; the sequence is TDIHSDSKTDTRSDS. Residues 238-247 show a composition bias toward acidic residues; it reads EVSDGFEDLN.

This sequence belongs to the TALE/IRO homeobox family. As to expression, primarily expressed in the developing central nervous system (CNS). At gastrula stage, expressed in both the superficial and deep layers of the presumptive neural plate with expression spreading to the prospective hindbrain, spinal cord and midbrain-hindbrain junction as neurulation proceeds. Not expressed in the anterior neural plate and CNS expression in the tadpole excludes the forebrain. Outside of the CNS, expressed around the closing blastopore at early gastrula stages and as gastrulation proceeds, expression switches to the anterior lateral plate mesoderm. In tadpoles, expressed in the ectodermal layer of the branchial arches, and in the otic vesicle. Also expressed in specific and overlapping dynamic patterns with irx1 and irx2 during pronephric kidney development. Renal expression begins before segment-specific terminal differentiation in the pronephric anlage at mid-neurula stage, and is later found in proximal tubule PT3 as well as intermediate tubule segments IT1 and IT2, with expression in the kidney being maintained through to the tadpole stage.

It localises to the nucleus. Acts partially redundantly with other irx members in neural patterning. Required for formation of the posterior forebrain, midbrain, hindbrain, and to a lesser extent, spinal cord. Both up-regulates and down-regulates gene expression during neural development. Acts early in neural plate development to induce proneural gene expression and specify a neural precursor state. Also up-regulates repressors that prevent neuronal differentiation. Required during at least two stages of pronephros kidney development; during neurula stages, maintains transcription of key renal genes to define the size and identity of the pronephric anlage, probably in part through regulation of bmp-signaling. Subsequently required for proper formation of the intermediate tubule segment of the pronephros. The chain is Iroquois-class homeodomain protein irx-3 (irx3) from Xenopus laevis (African clawed frog).